A 422-amino-acid chain; its full sequence is Blood group Rh(D) polypeptide (422 aa).

12 helical membrane-spanning segments follow: residues 13-33 (LPLW…FLIG), 43-63 (FMAI…GFGF), 76-96 (VAFS…LDYF), 113-135 (FLSI…AVLG), 137-159 (VNLV…IRVA), 170-190 (IIMM…AWWL), 215-235 (LFAM…NSAL), 244-266 (AVFN…SALS), 272-292 (INMV…GAPS), 294-314 (LISS…ISIW), 335-355 (YTFG…HIIA), and 372-392 (VGAL…TGCL).

It belongs to the ammonium transporter (TC 2.A.49) family. Rh subfamily. Palmitoylated.

Its subcellular location is the cell membrane. In terms of biological role, may be part of an oligomeric complex which is likely to have a transport or channel function in the erythrocyte membrane. The polypeptide is Blood group Rh(D) polypeptide (Rhd) (Rattus norvegicus (Rat)).